A 442-amino-acid polypeptide reads, in one-letter code: Serine hydroxymethyltransferase (442 aa).

Pyridoxal 5'-phosphate contacts are provided by residues Y54, 100-102 (SGS), and H236. A disulfide bridge connects residues C125 and C364. Position 237 is an N6-(pyridoxal phosphate)lysine (K237). G272 contacts pyridoxal 5'-phosphate.

The protein belongs to the SHMT family. In terms of assembly, homodimer. Pyridoxal 5'-phosphate is required as a cofactor.

It localises to the cytoplasm. Its subcellular location is the mitochondrion matrix. The protein resides in the plastid. It is found in the apicoplast. The protein localises to the nucleus. It catalyses the reaction (6R)-5,10-methylene-5,6,7,8-tetrahydrofolate + glycine + H2O = (6S)-5,6,7,8-tetrahydrofolate + L-serine. The protein operates within one-carbon metabolism; tetrahydrofolate interconversion. Its activity is regulated as follows. Redox regulation; active in reducing conditions, inactive in oxidizing conditions. The reduction of the cysteine pairs allows the access binding of the tetrahydrofolate substrate to its binding site. This mechanism appears to be unique to Plasmodium species. Its function is as follows. Catalyzes the interconversion of serine to glycine accompanied with the production of 5,10-methylenetetrahydrofolate, a source of one-carbon units used by thymidylate synthase to convert dUMP to dTMP for DNA synthesis. Binds to its own mRNA and to the mRNA of bifunctional dihydrofolate reductase-thymidylate synthase (DHFR-TS) in vitro; the physiological relevance of this interaction is not clear. This is Serine hydroxymethyltransferase from Plasmodium falciparum (isolate 3D7).